We begin with the raw amino-acid sequence, 322 residues long: Lipoyl synthase (322 aa).

Positions 1–12 are enriched in polar residues; the sequence is MVTVLNTVNQSG. The disordered stretch occupies residues 1–22; it reads MVTVLNTVNQSGRLRHPEKAHR. [4Fe-4S] cluster is bound by residues Cys-60, Cys-65, Cys-71, Cys-86, Cys-90, Cys-93, and Ser-299. The region spanning 72–288 is the Radical SAM core domain; sequence WEKKHATFMI…ETIGKTKGFL (217 aa).

This sequence belongs to the radical SAM superfamily. Lipoyl synthase family. [4Fe-4S] cluster is required as a cofactor.

The protein localises to the cytoplasm. It catalyses the reaction [[Fe-S] cluster scaffold protein carrying a second [4Fe-4S](2+) cluster] + N(6)-octanoyl-L-lysyl-[protein] + 2 oxidized [2Fe-2S]-[ferredoxin] + 2 S-adenosyl-L-methionine + 4 H(+) = [[Fe-S] cluster scaffold protein] + N(6)-[(R)-dihydrolipoyl]-L-lysyl-[protein] + 4 Fe(3+) + 2 hydrogen sulfide + 2 5'-deoxyadenosine + 2 L-methionine + 2 reduced [2Fe-2S]-[ferredoxin]. The protein operates within protein modification; protein lipoylation via endogenous pathway; protein N(6)-(lipoyl)lysine from octanoyl-[acyl-carrier-protein]: step 2/2. Functionally, catalyzes the radical-mediated insertion of two sulfur atoms into the C-6 and C-8 positions of the octanoyl moiety bound to the lipoyl domains of lipoate-dependent enzymes, thereby converting the octanoylated domains into lipoylated derivatives. The protein is Lipoyl synthase of Brucella abortus (strain S19).